The primary structure comprises 434 residues: Putative ankyrin repeat protein FPV023 (434 aa).

ANK repeat units follow at residues 33-62 (RLKI…DPVA), 134-163 (LTIS…DINF), 167-197 (IGNT…DINI), 201-230 (YGTT…DPNS), 236-265 (IGTK…DPNI), 269-299 (AGVT…DPNI), and 303-330 (NGTT…DINI).

The polypeptide is Putative ankyrin repeat protein FPV023 (Fowlpox virus (strain NVSL) (FPV)).